Reading from the N-terminus, the 1161-residue chain is Cell wall protein DAN4 (1161 aa).

A signal peptide spans 1-19 (MVNISIVAGIVALATSAAA). Disordered stretches follow at residues 123-309 (TSTS…SASS), 326-345 (TPAT…STTN), 354-547 (TTTS…SSFG), and 691-713 (STDS…SSTA). The interval 134–286 (TSTTPTTTIT…TTSTTSTTST (153 aa)) is 46 X 3 AA tandem repeats of T-[SP]-T. The segment covering 354-372 (TTTSDTYISSSSPSQVTSS) has biased composition (low complexity). A run of 14 repeats spans residues 373 to 384 (AEPTTVSEVTSS), 385 to 396 (VEPTRSSQVTSS), 397 to 408 (AEPTTVSEFTSS), 409 to 420 (VEPTRSSQVTSS), 421 to 432 (AEPTTVSEFTSS), 433 to 444 (VEPTRSSQVTSS), 445 to 456 (AEPTTVSEFTSS), 457 to 468 (VEPTRSSQVTSS), 469 to 480 (AEPTTVSEFTSS), 481 to 492 (VEPTRSSQVTSS), 493 to 504 (AEPTTVSEFTSS), 505 to 516 (VEPIRSSQVTSS), 517 to 528 (AEPTTVSEVTSS), and 529 to 540 (VEPIRSSQVTTT). Residues 373–540 (AEPTTVSEVT…PIRSSQVTTT (168 aa)) are 14 X 12 AA approximate tandem repeats. The segment covering 373 to 547 (AEPTTVSEVT…TTTEPVSSFG (175 aa)) has biased composition (polar residues). Tandem repeats lie at residues 826 to 913 (EDSV…EDNE) and 914 to 1001 (EDIT…EDNE). The segment at 826 to 1040 (EDSVLTKTQV…SPVSSFNSKA (215 aa)) is 2.5 X 88 AA approximate tandem repeats. The stretch at 1002–1040 (EDVASTKTELLTMETTITSCSGGICTTLMSPVSSFNSKA) is one 2-3; truncated repeat. Residue Asn-1137 is the site of GPI-anchor amidated asparagine attachment. Positions 1138–1161 (GAYNFDKDNIFGTAIVAVVALLLL) are cleaved as a propeptide — removed in mature form.

The protein belongs to the SRP1/TIP1 family. In terms of processing, extensively O-glycosylated. The GPI-anchor is attached to the protein in the endoplasmic reticulum and serves to target the protein to the cell surface. There, the glucosamine-inositol phospholipid moiety is cleaved off and the GPI-modified mannoprotein is covalently attached via its lipidless GPI glycan remnant to the 1,6-beta-glucan of the outer cell wall layer.

It localises to the secreted. It is found in the cell wall. The protein resides in the cell membrane. Its function is as follows. Component of the cell wall. The sequence is that of Cell wall protein DAN4 from Saccharomyces cerevisiae (strain ATCC 204508 / S288c) (Baker's yeast).